The chain runs to 238 residues: Ribonuclease-like storage protein (238 aa).

The N-terminal stretch at 1-23 is a signal peptide; the sequence is MRAIYIISVIIVSLSIFSWGGNA. Glutamine 37 provides a ligand contact to RNA. A disulfide bridge links cysteine 43 with cysteine 49. RNA is bound by residues histidine 61, phenylalanine 109, 112-113, and 116-117; these read HE and KH. The Proton donor role is filled by histidine 61. 2 cysteine pairs are disulfide-bonded: cysteine 76–cysteine 120 and cysteine 196–cysteine 207. Glutamate 113 is an active-site residue. Catalysis depends on histidine 117, which acts as the Proton acceptor.

Belongs to the RNase T2 family. As to quaternary structure, homodimer. In terms of tissue distribution, root.

In terms of biological role, may act as a storage protein providing a nitrogen source. Seems to have no RNase activity although it has conserved the active site residues. The chain is Ribonuclease-like storage protein from Panax ginseng (Korean ginseng).